We begin with the raw amino-acid sequence, 61 residues long: Small ribosomal subunit protein uS14 (61 aa).

4 residues coordinate Zn(2+): C24, C27, C40, and C43.

This sequence belongs to the universal ribosomal protein uS14 family. Zinc-binding uS14 subfamily. Part of the 30S ribosomal subunit. Contacts proteins S3 and S10. Zn(2+) serves as cofactor.

Binds 16S rRNA, required for the assembly of 30S particles and may also be responsible for determining the conformation of the 16S rRNA at the A site. The protein is Small ribosomal subunit protein uS14 of Campylobacter curvus (strain 525.92).